A 308-amino-acid polypeptide reads, in one-letter code: Cysteine synthase (308 aa).

Residue Lys-45 is modified to N6-(pyridoxal phosphate)lysine. Pyridoxal 5'-phosphate-binding positions include Asn-75, Gly-179–Thr-183, and Ser-267.

It belongs to the cysteine synthase/cystathionine beta-synthase family. In terms of assembly, homodimer. Forms CymR(2):CysK(2) or CymR(4):CysK(4) complexes in the absence of O-acetylserine. Pyridoxal 5'-phosphate serves as cofactor.

The enzyme catalyses O-acetyl-L-serine + hydrogen sulfide = L-cysteine + acetate. It functions in the pathway amino-acid biosynthesis; L-cysteine biosynthesis; L-cysteine from L-serine: step 2/2. Catalyzes the conversion of O-acetylserine to cysteine. Also acts as a sensor of cysteine availability in the signal transduction pathway modulating CymR activity. When cysteine is present, the pool of O-acetylserine (OAS) is low, which leads to the formation of a CymR-CysK complex and transcriptional repression of the CymR regulon occurs. In the absence of cysteine, the OAS pool is high and the CymR-CysK complex is mostly dissociated, leading to a faster dissociation of CymR from its DNA targets and the lifting of CymR-dependent repression. The sequence is that of Cysteine synthase (cysK) from Bacillus subtilis (strain 168).